Reading from the N-terminus, the 420-residue chain is UDP-N-acetylglucosamine 1-carboxyvinyltransferase (420 aa).

Lys-22 to Asn-23 contributes to the phosphoenolpyruvate binding site. Arg-92 lines the UDP-N-acetyl-alpha-D-glucosamine pocket. Cys-116 acts as the Proton donor in catalysis. 2-(S-cysteinyl)pyruvic acid O-phosphothioketal is present on Cys-116. UDP-N-acetyl-alpha-D-glucosamine-binding positions include Arg-121–Gln-125, Asp-304, and Ile-326.

It belongs to the EPSP synthase family. MurA subfamily.

The protein resides in the cytoplasm. The enzyme catalyses phosphoenolpyruvate + UDP-N-acetyl-alpha-D-glucosamine = UDP-N-acetyl-3-O-(1-carboxyvinyl)-alpha-D-glucosamine + phosphate. It functions in the pathway cell wall biogenesis; peptidoglycan biosynthesis. In terms of biological role, cell wall formation. Adds enolpyruvyl to UDP-N-acetylglucosamine. This Paraburkholderia phymatum (strain DSM 17167 / CIP 108236 / LMG 21445 / STM815) (Burkholderia phymatum) protein is UDP-N-acetylglucosamine 1-carboxyvinyltransferase.